The primary structure comprises 535 residues: EH domain-containing protein 3 (535 aa).

At Met-1 the chain carries N-acetylmethionine. The region spanning 55–286 is the Dynamin-type G domain; that stretch reads FDNKPMVLLV…DLFKDIQSLP (232 aa). The segment at 65-72 is G1 motif; it reads GQYSTGKT. 65–72 contributes to the ATP binding site; sequence GQYSTGKT. The G2 motif stretch occupies residues 91-92; sequence EP. Residues 153 to 156 form a G3 motif region; sequence DTPG. Residues 198-227 are a coiled coil; sequence DEFSEVIKALKNHEDKMRVVLNKADQIETQ. Positions 219–222 are G4 motif; the sequence is NKAD. Lys-220 contacts ATP. Residue Ile-243 is a region of interest, G5 motif. Trp-258 contacts ATP. Lys-315 is covalently cross-linked (Glycyl lysine isopeptide (Lys-Gly) (interchain with G-Cter in SUMO)). Phosphoserine is present on residues Ser-349 and Ser-456. Positions 444–532 constitute an EH domain; it reads DKPMYDEIFY…AHLLPPSKRK (89 aa). In terms of domain architecture, EF-hand spans 476-511; sequence LPNSVLGKIWKLADIDKDGMLDDEEFALANHLIKVK. The Ca(2+) site is built by Asp-489, Asp-491, Asp-493, Met-495, and Glu-500. Residue Lys-511 forms a Glycyl lysine isopeptide (Lys-Gly) (interchain with G-Cter in SUMO) linkage.

The protein belongs to the TRAFAC class dynamin-like GTPase superfamily. Dynamin/Fzo/YdjA family. EHD subfamily. As to quaternary structure, homooligomer, and heterooligomer with EHD1, EHD2 and EHD4, ATP-binding is required for heterooligomerization. Interacts with PACSIN1. Interacts with PACSIN2. Interacts (via EH domain) with MICALL1. Interacts (via EH domain) with RAB11FIP2. Interacts with ANK2. Interacts with CACNA1GG and CACNA1H.

It localises to the recycling endosome membrane. Its subcellular location is the cell membrane. The protein localises to the cell projection. It is found in the cilium membrane. Its function is as follows. ATP- and membrane-binding protein that controls membrane reorganization/tubulation upon ATP hydrolysis. In vitro causes tubulation of endocytic membranes. Binding to phosphatidic acid induces its membrane tubulation activity. Plays a role in endocytic transport. Involved in early endosome to recycling endosome compartment (ERC), retrograde early endosome to Golgi, and endosome to plasma membrane (rapid recycling) protein transport. Involved in the regulation of Golgi maintenance and morphology. Involved in the recycling of internalized D1 dopamine receptor. Plays a role in cardiac protein trafficking probably implicating ANK2. Involved in the ventricular membrane targeting of SLC8A1 and CACNA1C and probably the atrial membrane localization of CACNA1GG and CACNA1H implicated in the regulation of atrial myocyte excitability and cardiac conduction. In conjunction with EHD4 may be involved in endocytic trafficking of KDR/VEGFR2 implicated in control of glomerular function. Involved in the rapid recycling of integrin beta-3 implicated in cell adhesion maintenance. Involved in the unidirectional retrograde dendritic transport of endocytosed BACE1 and in efficient sorting of BACE1 to axons implicating a function in neuronal APP processing. Plays a role in the formation of the ciliary vesicle, an early step in cilium biogenesis; possibly sharing redundant functions with Ehd1. The protein is EH domain-containing protein 3 of Rattus norvegicus (Rat).